The chain runs to 423 residues: Large ribosomal subunit protein mL37 (423 aa).

The transit peptide at methionine 1–glycine 29 directs the protein to the mitochondrion.

The protein belongs to the mitochondrion-specific ribosomal protein mL37 family. Component of the mitochondrial ribosome large subunit (39S) which comprises a 16S rRNA and about 50 distinct proteins.

The protein localises to the mitochondrion. The sequence is that of Large ribosomal subunit protein mL37 (Mrpl37) from Rattus norvegicus (Rat).